An 84-amino-acid polypeptide reads, in one-letter code: Large ribosomal subunit protein bL27 (84 aa).

A disordered region spans residues 1–22 (MAHKKAGGSTRNGRDSESKRLG).

Belongs to the bacterial ribosomal protein bL27 family.

The protein is Large ribosomal subunit protein bL27 of Shewanella sp. (strain MR-4).